Consider the following 109-residue polypeptide: Nucleoid-associated protein VC_1055 (109 aa).

A disordered region spans residues 1–22 (MFGKGGMGNLMKQAQQMQERMQ).

This sequence belongs to the YbaB/EbfC family. As to quaternary structure, homodimer.

It is found in the cytoplasm. It localises to the nucleoid. Its function is as follows. Binds to DNA and alters its conformation. May be involved in regulation of gene expression, nucleoid organization and DNA protection. This is Nucleoid-associated protein VC_1055 from Vibrio cholerae serotype O1 (strain ATCC 39315 / El Tor Inaba N16961).